We begin with the raw amino-acid sequence, 307 residues long: Putative ankyrin repeat protein L59 (307 aa).

ANK repeat units follow at residues 41–67 (LFNKLLKVALKNRNLPMVKFVCDNLEK), 68–97 (IDNKAITLAAKYNCLEILKYLHEKGLDTTN), 98–127 (HNYSALSWAARNNDFKMVEYLQHQGSDIRA), 129–157 (DDEALRWAALSGCLEMVEYLQTQGCDVRN), 158–187 (RNDFAIKYAARNGHFKLVRYLHSQGSDIRT), 188–217 (DDDYALRWAARNGHLEIVKYLHSKGCNIHA), 219–247 (GDSAIKWASMGGYLEIVEYLHGVGCDIRI), 248–277 (DNDYPIRWAASNGHLEVVEYLFSQGCDIGA), and 279–307 (NNYALMWAKKNGHDDVVEYIVLLKLLKLY).

This is Putative ankyrin repeat protein L59 from Acanthamoeba polyphaga (Amoeba).